Consider the following 372-residue polypeptide: MTALPQRTLMVMAGGTGGHVFPGLAVAHLMQAWGWKVVWLGNPAGMEATLVPKHGIPMEYVRFGGLRGKGLKTKLMLPLNLLRACTQSLSVLRRVKPDVVLGMGGYITFPAGLMTALSGRPLVLHEQNSIAGLANKVLAKVAKRVLVAFPNALPHGEWTGNPIRAELAGAIAPKARYAQRSGPLNVLVVGGSLGAAALNEVVPRAVALLAPNERPRIVHQAGAKHIEALRENYAAAGLQAGADVELVPFIDDMTSAYANADLVICRSGAMTVSEISAVGVAALFVPFPYAVDDHQTTNAAFLADNGAALVVQQRDLSAETLADWLRSQTRETLAEMAERSRSLAKPDATEQVAQICATVAGSISGASPEGKQ.

UDP-N-acetyl-alpha-D-glucosamine is bound by residues 16–18, Asn-128, Arg-164, Ser-192, Ile-250, and Gln-295; that span reads TGG.

It belongs to the glycosyltransferase 28 family. MurG subfamily.

It localises to the cell inner membrane. The enzyme catalyses di-trans,octa-cis-undecaprenyl diphospho-N-acetyl-alpha-D-muramoyl-L-alanyl-D-glutamyl-meso-2,6-diaminopimeloyl-D-alanyl-D-alanine + UDP-N-acetyl-alpha-D-glucosamine = di-trans,octa-cis-undecaprenyl diphospho-[N-acetyl-alpha-D-glucosaminyl-(1-&gt;4)]-N-acetyl-alpha-D-muramoyl-L-alanyl-D-glutamyl-meso-2,6-diaminopimeloyl-D-alanyl-D-alanine + UDP + H(+). It participates in cell wall biogenesis; peptidoglycan biosynthesis. Cell wall formation. Catalyzes the transfer of a GlcNAc subunit on undecaprenyl-pyrophosphoryl-MurNAc-pentapeptide (lipid intermediate I) to form undecaprenyl-pyrophosphoryl-MurNAc-(pentapeptide)GlcNAc (lipid intermediate II). This chain is UDP-N-acetylglucosamine--N-acetylmuramyl-(pentapeptide) pyrophosphoryl-undecaprenol N-acetylglucosamine transferase, found in Paraburkholderia xenovorans (strain LB400).